We begin with the raw amino-acid sequence, 172 residues long: MLDAFAKVVAQADARGEFLSNVQLDGLSAMVADGNKRLDAVNAINSNASSIVTSAARALFAEQPQLIQPGGNAYTNRRMAACLRDMEIILRYVSYAAIAGDSSVLDDRCLNGLKETYQALGTPGASVAAGVQKMKEAAIAVANDSSNVTVGDCSALMAEIASYFDRAAAAVA.

The residue at position 72 (Asn-72) is an N4-methylasparagine. Positions 82 and 153 each coordinate (2R,3E)-phycocyanobilin.

This sequence belongs to the phycobiliprotein family. In terms of assembly, heterodimer of an alpha and a beta subunit, which further assembles into trimers and the trimers into hexamers. The basic functional unit of phycobiliproteins is a ring-shaped hexamer formed from two back-to-back trimers contacting via the alpha chain subunits. The trimers are composed of alpha/beta subunit heterodimers arranged around a three-fold axis of symmetry. The phycoerythrins also contain a gamma subunit which is located in the center of the hexamer. Contains two covalently linked bilin chromophores.

It is found in the plastid. It localises to the chloroplast thylakoid membrane. Light-harvesting photosynthetic bile pigment-protein from the phycobiliprotein complex (phycobilisome, PBS). Phycocyanin is the major phycobiliprotein in the PBS rod. This chain is C-phycocyanin beta chain (cpcB), found in Rhodella violacea (Red alga).